A 449-amino-acid chain; its full sequence is Monoacylglycerol lipase (449 aa).

Lys-82 participates in a covalent cross-link: Glycyl lysine isopeptide (Lys-Gly) (interchain with G-Cter in ubiquitin). In terms of domain architecture, AB hydrolase-1 spans 151 to 392 (PMLIILHGLT…LLLETSTGGH (242 aa)). The GXSXG motif lies at 230–234 (GFSLG). Ser-232 acts as the Nucleophile in catalysis. Catalysis depends on charge relay system residues Asp-364 and His-392.

This sequence belongs to the AB hydrolase superfamily. AB hydrolase 4 family.

It carries out the reaction Hydrolyzes glycerol monoesters of long-chain fatty acids.. The catalysed reaction is 1-hexadecanoylglycerol + H2O = glycerol + hexadecanoate + H(+). The enzyme catalyses 1-octadecanoylglycerol + H2O = octadecanoate + glycerol + H(+). It catalyses the reaction 1-(9Z-octadecenoyl)-glycerol + H2O = glycerol + (9Z)-octadecenoate + H(+). In terms of biological role, converts monoacylglycerides (MAG) to free fatty acids and glycerol. Has a preference for palmitoyl-MAG. Does not play a significant role in ethyl ester biosynthesis. Also possesses ester hydrolase and low but persistent TAG lipase activity. This is Monoacylglycerol lipase from Saccharomyces cerevisiae (strain ATCC 204508 / S288c) (Baker's yeast).